The primary structure comprises 399 residues: G2/mitotic-specific cyclin-B2 (399 aa).

The disordered stretch occupies residues 58-78; it reads PVKATKGPGKMTNTVVPPKPP.

The protein belongs to the cyclin family. Cyclin AB subfamily. As to quaternary structure, interacts with the CDK1 protein kinase to form a serine/threonine kinase holoenzyme complex also known as maturation promoting factor (MPF). The cyclin subunit imparts substrate specificity to the complex.

Its function is as follows. Essential for the control of the cell cycle at the G2/M (mitosis) transition. This chain is G2/mitotic-specific cyclin-B2 (CCNB2), found in Gallus gallus (Chicken).